The chain runs to 282 residues: ATP phosphoribosyltransferase (282 aa).

It belongs to the ATP phosphoribosyltransferase family. Long subfamily. Mg(2+) is required as a cofactor.

The protein localises to the cytoplasm. It catalyses the reaction 1-(5-phospho-beta-D-ribosyl)-ATP + diphosphate = 5-phospho-alpha-D-ribose 1-diphosphate + ATP. Its pathway is amino-acid biosynthesis; L-histidine biosynthesis; L-histidine from 5-phospho-alpha-D-ribose 1-diphosphate: step 1/9. Feedback inhibited by histidine. In terms of biological role, catalyzes the condensation of ATP and 5-phosphoribose 1-diphosphate to form N'-(5'-phosphoribosyl)-ATP (PR-ATP). Has a crucial role in the pathway because the rate of histidine biosynthesis seems to be controlled primarily by regulation of HisG enzymatic activity. The protein is ATP phosphoribosyltransferase of Haloarcula marismortui (strain ATCC 43049 / DSM 3752 / JCM 8966 / VKM B-1809) (Halobacterium marismortui).